The sequence spans 492 residues: Cobyric acid synthase (492 aa).

The GATase cobBQ-type domain maps to 259-453 (HTTVAVVAYP…LHGLFEDAVA (195 aa)). Residue Cys340 is the Nucleophile of the active site. Residue His445 is part of the active site.

This sequence belongs to the CobB/CobQ family. CobQ subfamily.

The protein operates within cofactor biosynthesis; adenosylcobalamin biosynthesis. Its function is as follows. Catalyzes amidations at positions B, D, E, and G on adenosylcobyrinic A,C-diamide. NH(2) groups are provided by glutamine, and one molecule of ATP is hydrogenolyzed for each amidation. This is Cobyric acid synthase from Paracidovorax citrulli (strain AAC00-1) (Acidovorax citrulli).